The primary structure comprises 274 residues: Dermonecrotic toxin SdSicTox-betaIIB1biv (274 aa).

Residue His-5 is part of the active site. The Mg(2+) site is built by Glu-25 and Asp-27. Catalysis depends on His-41, which acts as the Nucleophile. 2 disulfides stabilise this stretch: Cys-45–Cys-51 and Cys-47–Cys-190. Mg(2+) is bound at residue Asp-85.

This sequence belongs to the arthropod phospholipase D family. Class II subfamily. It depends on Mg(2+) as a cofactor. In terms of tissue distribution, expressed by the venom gland.

It is found in the secreted. The catalysed reaction is an N-(acyl)-sphingosylphosphocholine = an N-(acyl)-sphingosyl-1,3-cyclic phosphate + choline. It catalyses the reaction an N-(acyl)-sphingosylphosphoethanolamine = an N-(acyl)-sphingosyl-1,3-cyclic phosphate + ethanolamine. It carries out the reaction a 1-acyl-sn-glycero-3-phosphocholine = a 1-acyl-sn-glycero-2,3-cyclic phosphate + choline. The enzyme catalyses a 1-acyl-sn-glycero-3-phosphoethanolamine = a 1-acyl-sn-glycero-2,3-cyclic phosphate + ethanolamine. Functionally, dermonecrotic toxins cleave the phosphodiester linkage between the phosphate and headgroup of certain phospholipids (sphingolipid and lysolipid substrates), forming an alcohol (often choline) and a cyclic phosphate. This toxin acts on sphingomyelin (SM). It may also act on ceramide phosphoethanolamine (CPE), lysophosphatidylcholine (LPC) and lysophosphatidylethanolamine (LPE), but not on lysophosphatidylserine (LPS), and lysophosphatidylglycerol (LPG). It acts by transphosphatidylation, releasing exclusively cyclic phosphate products as second products. Induces dermonecrosis, hemolysis, increased vascular permeability, edema, inflammatory response, and platelet aggregation. The polypeptide is Dermonecrotic toxin SdSicTox-betaIIB1biv (Sicarius cf. damarensis (strain GJB-2008) (Six-eyed sand spider)).